We begin with the raw amino-acid sequence, 1535 residues long: ABC multidrug transporter atrF (1535 aa).

Positions M1–Y115 are disordered. A glycan (N-linked (GlcNAc...) asparagine) is linked at N33. Positions T34–D45 are enriched in low complexity. Over residues A46–T76 the composition is skewed to basic and acidic residues. Residues S79–S93 show a composition bias toward basic residues. N-linked (GlcNAc...) asparagine glycosylation is found at N149, N274, N287, and N351. Positions V185–E427 constitute an ABC transporter 1 domain. 7 helical membrane-spanning segments follow: residues L540–G560, G573–V593, V618–F638, A646–L666, A680–P700, G703–S723, and F791–V811. The tract at residues K834–A868 is disordered. In terms of domain architecture, ABC transporter 2 spans F879–G1117. N-linked (GlcNAc...) asparagine glycosylation occurs at N892. G915–T922 contributes to the ATP binding site. The next 6 helical transmembrane spans lie at Y1212 to L1232, I1246 to I1266, I1295 to F1315, S1320 to G1340, W1342 to V1362, and W1384 to V1406. N-linked (GlcNAc...) asparagine glycosylation occurs at N1459. A run of 2 helical transmembrane segments spans residues C1477–Y1497 and G1503–K1523.

It belongs to the ABC transporter superfamily. ABCG family. PDR (TC 3.A.1.205) subfamily.

The protein resides in the cell membrane. It carries out the reaction voriconazole(in) + ATP + H2O = voriconazole(out) + ADP + phosphate + H(+). Functionally, pleiotropic ABC efflux transporter involved in the basal level of azole susceptibility. Confers resistance to voriconazole. This is ABC multidrug transporter atrF from Aspergillus flavus (strain ATCC 200026 / FGSC A1120 / IAM 13836 / NRRL 3357 / JCM 12722 / SRRC 167).